Reading from the N-terminus, the 414-residue chain is Serine/threonine transporter SstT (414 aa).

Over Thr2–His15 the chain is Cytoplasmic. A helical transmembrane segment spans residues Gly16–Ser36. At Lys37 to Leu45 the chain is on the periplasmic side. The helical transmembrane segment at Leu46 to Val66 threads the bilayer. Residues Met67–Pro83 lie on the Cytoplasmic side of the membrane. The helical transmembrane segment at Ile84 to Phe104 threads the bilayer. Residues Ala105–Asp142 are Periplasmic-facing. The chain crosses the membrane as a helical span at residues Ala143–Leu163. Residues Arg164–Asn179 are Cytoplasmic-facing. The helical transmembrane segment at Ala180–Val200 threads the bilayer. Residues Ser201–Gln217 lie on the Periplasmic side of the membrane. The helical transmembrane segment at Leu218–Val238 threads the bilayer. The Cytoplasmic portion of the chain corresponds to Trp239 to Asn299. The helical transmembrane segment at Met300–Ile320 threads the bilayer. Topologically, residues Pro321–Ser331 are periplasmic. The chain crosses the membrane as a helical span at residues Val332–Ile352. Over Pro353–Asn414 the chain is Cytoplasmic.

This sequence belongs to the dicarboxylate/amino acid:cation symporter (DAACS) (TC 2.A.23) family.

The protein resides in the cell inner membrane. It catalyses the reaction L-serine(in) + Na(+)(in) = L-serine(out) + Na(+)(out). The catalysed reaction is L-threonine(in) + Na(+)(in) = L-threonine(out) + Na(+)(out). Involved in the import of serine and threonine into the cell, with the concomitant import of sodium (symport system). The polypeptide is Serine/threonine transporter SstT (Shigella flexneri serotype 5b (strain 8401)).